We begin with the raw amino-acid sequence, 723 residues long: Multiple organellar RNA editing factor 4, mitochondrial (723 aa).

The N-terminal 64 residues, 1-64, are a transit peptide targeting the mitochondrion; it reads MAMFSHRLRR…RLFSTTQYQY (64 aa). 3 disordered regions span residues 180-303, 318-474, and 663-723; these read ITPG…GQTQ, RQEM…EGQP, and QNGG…NSRI. Positions 191–204 are enriched in basic and acidic residues; the sequence is EGFDSLKKESKPEQ. Polar residues-rich tracts occupy residues 219 to 233, 273 to 303, 327 to 365, and 373 to 430; these read TSGQ…TLPD, GQWQ…GQTQ, GQAQ…QGAQ, and QGAQ…NYSP. 2 stretches are compositionally biased toward low complexity: residues 459–474 and 682–695; these read QGQG…EGQP and QGFS…TFQQ. The segment covering 714 to 723 has biased composition (basic and acidic residues); that stretch reads TETRKPNSRI.

This sequence belongs to the MORF family. In terms of assembly, heterodimers with MORF8/RIP1, MORF1/RIP8 and MORF3/RIP3.

The protein localises to the mitochondrion. Involved in organellar RNA editing. Required for the processing of few RNA editing site in mitochondria. The chain is Multiple organellar RNA editing factor 4, mitochondrial from Arabidopsis thaliana (Mouse-ear cress).